The primary structure comprises 420 residues: Succinate--CoA ligase [GDP-forming] subunit beta, mitochondrial (420 aa).

The 229-residue stretch at lysine 35–phenylalanine 263 folds into the ATP-grasp domain. GTP-binding positions include glutamine 46, glycine 78–glycine 80, and valine 135. Asparagine 232 and aspartate 246 together coordinate Mg(2+). Substrate-binding positions include asparagine 297 and glycine 354–methionine 356.

It belongs to the succinate/malate CoA ligase beta subunit family. GTP-specific subunit beta subfamily. As to quaternary structure, heterodimer of an alpha and a beta subunit. The beta subunit determines specificity for GTP. Requires Mg(2+) as cofactor.

The protein localises to the mitochondrion. It carries out the reaction GTP + succinate + CoA = succinyl-CoA + GDP + phosphate. It functions in the pathway carbohydrate metabolism; tricarboxylic acid cycle; succinate from succinyl-CoA (ligase route): step 1/1. Its function is as follows. GTP-specific succinyl-CoA synthetase functions in the citric acid cycle (TCA), coupling the hydrolysis of succinyl-CoA to the synthesis of GTP and thus represents the only step of substrate-level phosphorylation in the TCA. The beta subunit provides nucleotide specificity of the enzyme and binds the substrate succinate, while the binding sites for coenzyme A and phosphate are found in the alpha subunit. The chain is Succinate--CoA ligase [GDP-forming] subunit beta, mitochondrial (scsB) from Dictyostelium discoideum (Social amoeba).